Reading from the N-terminus, the 434-residue chain is Asparagine--tRNA ligase (434 aa).

This sequence belongs to the class-II aminoacyl-tRNA synthetase family.

It localises to the cytoplasm. It catalyses the reaction tRNA(Asn) + L-asparagine + ATP = L-asparaginyl-tRNA(Asn) + AMP + diphosphate + H(+). In Pyrococcus horikoshii (strain ATCC 700860 / DSM 12428 / JCM 9974 / NBRC 100139 / OT-3), this protein is Asparagine--tRNA ligase.